A 100-amino-acid polypeptide reads, in one-letter code: RNA-binding protein YlxQ (100 aa).

The protein belongs to the eukaryotic ribosomal protein eL8 family.

Its function is as follows. RNA-binding protein that recognizes the K-turn motif present in ribosomal RNA, but also in box C/D and box C'/D' sRNAs. This chain is RNA-binding protein YlxQ, found in Bacillus subtilis (strain 168).